Here is a 740-residue protein sequence, read N- to C-terminus: Ion-translocating oxidoreductase complex subunit C (740 aa).

2 consecutive 4Fe-4S ferredoxin-type domains span residues 369-397 and 407-436; these read GEPQEEQSCIRCSACADACPADLLPQQLY and KATTHNIADCIECGACAWVCPSNIPLVQYF. C377, C380, C383, C387, C416, C419, C422, and C426 together coordinate [4Fe-4S] cluster. Residues 602-714 form a disordered region; sequence KLEQQQANAE…NAEPEEQIDP (113 aa). Residues 605 to 615 are compositionally biased toward low complexity; it reads QQQANAEPEQQ.

It belongs to the 4Fe4S bacterial-type ferredoxin family. RnfC subfamily. As to quaternary structure, the complex is composed of six subunits: RsxA, RsxB, RsxC, RsxD, RsxE and RsxG. [4Fe-4S] cluster is required as a cofactor.

The protein resides in the cell inner membrane. In terms of biological role, part of a membrane-bound complex that couples electron transfer with translocation of ions across the membrane. Required to maintain the reduced state of SoxR. This Escherichia coli O17:K52:H18 (strain UMN026 / ExPEC) protein is Ion-translocating oxidoreductase complex subunit C.